A 190-amino-acid polypeptide reads, in one-letter code: MTQTSNIILIGPMGAGKSTIGRQLAAALHLPFRDSDKEIEKRTGVDIPTIFEFEGEEGFRNRESAMLEELCTEQGIVLATGGGAVMRPQNRALLRDCGLVVYLKTSVKTQLRRTARDRNRPLLQTENPRARLEELMRIRDPLYREIAELTVDTDRDSIRKVVQEISRYYRMNNKDSIPQDDSNTEPQGDG.

14–19 lines the ATP pocket; sequence GAGKST. Serine 18 lines the Mg(2+) pocket. Aspartate 36, arginine 60, and glycine 82 together coordinate substrate. Arginine 120 contributes to the ATP binding site. Substrate is bound at residue arginine 139.

The protein belongs to the shikimate kinase family. Monomer. Mg(2+) serves as cofactor.

It is found in the cytoplasm. It carries out the reaction shikimate + ATP = 3-phosphoshikimate + ADP + H(+). Its pathway is metabolic intermediate biosynthesis; chorismate biosynthesis; chorismate from D-erythrose 4-phosphate and phosphoenolpyruvate: step 5/7. Catalyzes the specific phosphorylation of the 3-hydroxyl group of shikimic acid using ATP as a cosubstrate. This chain is Shikimate kinase, found in Thioalkalivibrio sulfidiphilus (strain HL-EbGR7).